Here is a 197-residue protein sequence, read N- to C-terminus: Phospholipid hydroperoxide glutathione peroxidase (197 aa).

Position 40 is a phosphoserine (Ser40). The active site involves Sec73. Position 73 (Sec73) is a non-standard amino acid, selenocysteine.

It belongs to the glutathione peroxidase family. Monomer. Has a tendency to form higher mass oligomers. Interacts with FUNDC1; this interaction promotes GPX4 recruitment into mitochondria through TOM/TIM complex where it is degraded by mitophagy.

It localises to the mitochondrion. The protein resides in the cytoplasm. The catalysed reaction is a hydroperoxy polyunsaturated fatty acid + 2 glutathione = a hydroxy polyunsaturated fatty acid + glutathione disulfide + H2O. The enzyme catalyses 2 glutathione + H2O2 = glutathione disulfide + 2 H2O. It carries out the reaction tert-butyl hydroperoxide + 2 glutathione = tert-butanol + glutathione disulfide + H2O. It catalyses the reaction cumene hydroperoxide + 2 glutathione = 2-phenylpropan-2-ol + glutathione disulfide + H2O. The catalysed reaction is (9S)-hydroperoxy-(10E,12Z)-octadecadienoate + 2 glutathione = (9S)-hydroxy-(10E,12Z)-octadecadienoate + glutathione disulfide + H2O. The enzyme catalyses (13S)-hydroperoxy-(9Z,11E)-octadecadienoate + 2 glutathione = (13S)-hydroxy-(9Z,11E)-octadecadienoate + glutathione disulfide + H2O. It carries out the reaction (5S)-hydroperoxy-(6E,8Z,11Z,14Z)-eicosatetraenoate + 2 glutathione = (5S)-hydroxy-(6E,8Z,11Z,14Z)-eicosatetraenoate + glutathione disulfide + H2O. It catalyses the reaction (12R)-hydroperoxy-(5Z,8Z,10E,14Z)-eicosatetraenoate + 2 glutathione = (12R)-hydroxy-(5Z,8Z,10E,14Z)-eicosatetraenoate + glutathione disulfide + H2O. The catalysed reaction is (12S)-hydroperoxy-(5Z,8Z,10E,14Z)-eicosatetraenoate + 2 glutathione = (12S)-hydroxy-(5Z,8Z,10E,14Z)-eicosatetraenoate + glutathione disulfide + H2O. The enzyme catalyses (15S)-hydroperoxy-(5Z,8Z,11Z,13E)-eicosatetraenoate + 2 glutathione = (15S)-hydroxy-(5Z,8Z,11Z,13E)-eicosatetraenoate + glutathione disulfide + H2O. It carries out the reaction (5S)-hydroperoxy-(6E,8Z,11Z,14Z,17Z)-eicosapentaenoate + 2 glutathione = (5S)-hydroxy-(6E,8Z,11Z,14Z,17Z)-eicosapentaenoate + glutathione disulfide + H2O. It catalyses the reaction (12S)-hydroperoxy-(5Z,8Z,10E,14Z,17Z)-eicosapentaenoate + 2 glutathione = (12S)-hydroxy-(5Z,8Z,10E,14Z,17Z)-eicosapentaenoate + glutathione disulfide + H2O. The catalysed reaction is (15S)-hydroperoxy-(5Z,8Z,11Z,13E,17Z)-eicosapentaenoate + 2 glutathione = (15S)-hydroxy-(5Z,8Z,11Z,13E,17Z)-eicosapentaenoate + glutathione disulfide + H2O. The enzyme catalyses (15S)-hydroperoxy-(11Z,13E)-eicosadienoate + 2 glutathione = (15S)-hydroxy-(11Z,13E)-eicosadienoate + glutathione disulfide + H2O. It carries out the reaction (17S)-hydroperoxy-(4Z,7Z,10Z,13Z,15E,19Z)-docosahexaenoate + 2 glutathione = (17S)-hydroxy-(4Z,7Z,10Z,13Z,15E,19Z)-docosahexaenoate + glutathione disulfide + H2O. It catalyses the reaction a hydroperoxy-1,2-diacyl-glycero-3-phosphocholine + 2 glutathione = a hydroxy-1,2-diacyl-glycero-3-phosphocholine + glutathione disulfide + H2O. Essential antioxidant peroxidase that directly reduces phospholipid hydroperoxide even if they are incorporated in membranes and lipoproteins. Can also reduce fatty acid hydroperoxide, cholesterol hydroperoxide and thymine hydroperoxide. Plays a key role in protecting cells from oxidative damage by preventing membrane lipid peroxidation. Required to prevent cells from ferroptosis, a non-apoptotic cell death resulting from an iron-dependent accumulation of lipid reactive oxygen species. The presence of selenocysteine (Sec) versus Cys at the active site is essential for life: it provides resistance to overoxidation and prevents cells against ferroptosis. The presence of Sec at the active site is also essential for the survival of a specific type of parvalbumin-positive interneurons, thereby preventing against fatal epileptic seizures. May be required to protect cells from the toxicity of ingested lipid hydroperoxides. Required for normal sperm development and male fertility. Essential for maturation and survival of photoreceptor cells. Plays a role in a primary T-cell response to viral and parasitic infection by protecting T-cells from ferroptosis and by supporting T-cell expansion. Plays a role of glutathione peroxidase in platelets in the arachidonic acid metabolism. Reduces hydroperoxy ester lipids formed by a 15-lipoxygenase that may play a role as down-regulator of the cellular 15-lipoxygenase pathway. Can also reduce small soluble hydroperoxides such as H2O2, cumene hydroperoxide and tert-butyl hydroperoxide. The sequence is that of Phospholipid hydroperoxide glutathione peroxidase from Bos taurus (Bovine).